The following is a 162-amino-acid chain: Translocator protein 2 (162 aa).

The next 5 membrane-spanning stretches (helical) occupy residues 3–23 (LQGP…CMLI), 44–64 (VILL…YLVW), 79–99 (LGLY…FLAA), 103–123 (GLAL…VFIW), and 129–149 (LAAL…AITY).

It belongs to the TspO/BZRP family. In terms of assembly, homotetramer. May also form homodimer. Expressed in liver, bone marrow and spleen. In spleen, detected in red pulp but not in white pulp.

It localises to the endoplasmic reticulum membrane. The protein localises to the cell membrane. In terms of biological role, cholesterol-binding protein involved in the redistribution of cholesterol from lipid droplets to the endoplasmic reticulum. Required to meet cholesterol demands during erythropoietic differentiation. May play a role in transport processes at the plasma membrane of erythrocytes, including regulating VDAC-mediated ATP export, and import of the heme precursors protoporphyrin IX and 5-aminolevulinic acid. The polypeptide is Translocator protein 2 (Tspo2) (Mus musculus (Mouse)).